We begin with the raw amino-acid sequence, 304 residues long: Homoserine kinase (304 aa).

91-101 (PLGKGMGSSAA) provides a ligand contact to ATP.

It belongs to the GHMP kinase family. Homoserine kinase subfamily.

Its subcellular location is the cytoplasm. It carries out the reaction L-homoserine + ATP = O-phospho-L-homoserine + ADP + H(+). The protein operates within amino-acid biosynthesis; L-threonine biosynthesis; L-threonine from L-aspartate: step 4/5. Catalyzes the ATP-dependent phosphorylation of L-homoserine to L-homoserine phosphate. This is Homoserine kinase from Solibacter usitatus (strain Ellin6076).